Here is a 276-residue protein sequence, read N- to C-terminus: NH(3)-dependent NAD(+) synthetase (276 aa).

43 to 50 (GISGGVDS) contributes to the ATP binding site. Aspartate 49 contacts Mg(2+). Residue arginine 146 coordinates deamido-NAD(+). Threonine 166 is a binding site for ATP. Glutamate 171 contributes to the Mg(2+) binding site. Residues lysine 179 and aspartate 186 each contribute to the deamido-NAD(+) site. Residues lysine 195 and threonine 217 each contribute to the ATP site. 266-267 (HK) serves as a coordination point for deamido-NAD(+).

This sequence belongs to the NAD synthetase family. As to quaternary structure, homodimer.

It catalyses the reaction deamido-NAD(+) + NH4(+) + ATP = AMP + diphosphate + NAD(+) + H(+). It functions in the pathway cofactor biosynthesis; NAD(+) biosynthesis; NAD(+) from deamido-NAD(+) (ammonia route): step 1/1. Functionally, catalyzes the ATP-dependent amidation of deamido-NAD to form NAD. Uses ammonia as a nitrogen source. The polypeptide is NH(3)-dependent NAD(+) synthetase (Shewanella piezotolerans (strain WP3 / JCM 13877)).